A 361-amino-acid polypeptide reads, in one-letter code: Palmitoyltransferase ZDHHC16 (361 aa).

Topologically, residues 1-77 (MRGQRSLLLG…VYWLVDNVIR (77 aa)) are cytoplasmic. The helical transmembrane segment at 78 to 98 (WFGVVFVVLVIVLTGSIVAIA) threads the bilayer. Over 99–116 (YLCVLPLILRTYSVPRLC) the chain is Lumenal. Residues 117-137 (WHFFYSHWNLILIVFHYYQAI) form a helical membrane-spanning segment. At 138 to 198 (TTPPGYPPQG…NNCVGHYNHR (61 aa)) the chain is on the cytoplasmic side. One can recognise a DHHC domain in the interval 155–205 (SICKKCIYPKPARTHHCSICNRCVLKMDHHCPWLNNCVGHYNHRYFFSFCF). Residue Cys-185 is the S-palmitoyl cysteine intermediate of the active site. The chain crosses the membrane as a helical span at residues 199–219 (YFFSFCFFMTLGCVYCSYGSW). The Lumenal segment spans residues 220-250 (DLFREAYAAIETYHQTPPPTFSFRERITHKS). Residues 251–271 (LVYLWFLCSSVALALGALTMW) form a helical membrane-spanning segment. Topologically, residues 272–361 (HAVLISRGET…TAHSASVMAV (90 aa)) are cytoplasmic.

It belongs to the DHHC palmitoyltransferase family. Interacts with ABL1. Interacts with COPS5. As to expression, ubiquitously expressed.

It localises to the endoplasmic reticulum membrane. The catalysed reaction is L-cysteinyl-[protein] + hexadecanoyl-CoA = S-hexadecanoyl-L-cysteinyl-[protein] + CoA. Functionally, palmitoyl acyltransferase that mediates palmitoylation of proteins such as PLN and ZDHHC6. Required during embryonic heart development and cardiac function, possibly by mediating palmitoylation of PLN, thereby affecting PLN phosphorylation and homooligomerization. Also required for eye development. Palmitoylates ZDHHC6, affecting the quaternary assembly of ZDHHC6, its localization, stability and function. May play a role in DNA damage response. May be involved in apoptosis regulation. Involved in the proliferation of neural stem cells by regulating the FGF/ERK pathway. The protein is Palmitoyltransferase ZDHHC16 of Mus musculus (Mouse).